The primary structure comprises 120 residues: Succinate dehydrogenase assembly factor 3, mitochondrial (120 aa).

The N-terminal 36 residues, 1–36 (MSRILMSQLTHPQRVRLLYKTILRLHRGLPAELRAL), are a transit peptide targeting the mitochondrion.

The protein belongs to the complex I LYR family. SDHAF3 subfamily. In terms of assembly, interacts with SdhB within an SdhA-SdhB subcomplex.

It is found in the mitochondrion matrix. Functionally, plays an essential role in the assembly of succinate dehydrogenase (SDH), an enzyme complex (also referred to as respiratory complex II) that is a component of both the tricarboxylic acid (TCA) cycle and the mitochondrial electron transport chain, and which couples the oxidation of succinate to fumarate with the reduction of ubiquinone (coenzyme Q) to ubiquinol. Promotes maturation of the iron-sulfur protein subunit SdhB of the SDH catalytic dimer, protecting it from the deleterious effects of oxidants. The protein is Succinate dehydrogenase assembly factor 3, mitochondrial of Drosophila melanogaster (Fruit fly).